The following is a 97-amino-acid chain: Integration host factor subunit alpha (97 aa).

Positions 49-71 (FGNFDLRDKNQRPGRNPKTGEDI) are disordered.

This sequence belongs to the bacterial histone-like protein family. Heterodimer of an alpha and a beta chain.

Its function is as follows. This protein is one of the two subunits of integration host factor, a specific DNA-binding protein that functions in genetic recombination as well as in transcriptional and translational control. The protein is Integration host factor subunit alpha of Shewanella woodyi (strain ATCC 51908 / MS32).